Here is a 331-residue protein sequence, read N- to C-terminus: D/L-glyceraldehyde reductase (331 aa).

Residue tyrosine 51 is the Proton donor of the active site. Histidine 114 contributes to the substrate binding site. 213-276 lines the NADP(+) pocket; it reads SAFGNNTKGL…SVTKARIAEN (64 aa).

The protein belongs to the aldo/keto reductase family.

It catalyses the reaction glycerol + NADP(+) = L-glyceraldehyde + NADPH + H(+). The enzyme catalyses glycerol + NADP(+) = D-glyceraldehyde + NADPH + H(+). The protein operates within carbohydrate acid metabolism. Functionally, mediates the conversion of L-glyceraldehyde to glycerol in D-galacturonate catabolic process. Also able to reduce D-glyceraldehyde. The protein is D/L-glyceraldehyde reductase (gld1) of Hypocrea jecorina (Trichoderma reesei).